The primary structure comprises 334 residues: MADQIAISVLGAGSYGSALAISLARNGHPTLLWGHDPAHVAELEHDRCNKAFLPDVPFPADLQLTADLQRAVQAAPVLLLVVPSHVFGQVLSQVKPFLRPDTRIAWATKGLEPDSGRLLQDVARDVLGETIPLAVISGPTFAKELAAGLPTAISVASTHDDFADELSHLLHCGRSFRVYTNPDFVGLQLGGAVKNVIAIGAGLSDGLGFGANARTALITRGLVEMQRLGAALGADAKTFMGMAGLGDLVLTCTDNQSRNRRFGLALGAGKAVETAMAEIGQVVEGYRNTKEVHLLAARCGVEMPICEQIFQVLYQGKNPKEAAIALLSRDKRDE.

The NADPH site is built by serine 14, tyrosine 15, histidine 35, and lysine 109. Residues lysine 109, glycine 138, and threonine 140 each coordinate sn-glycerol 3-phosphate. Alanine 142 contributes to the NADPH binding site. Residues lysine 194, aspartate 247, serine 257, arginine 258, and asparagine 259 each coordinate sn-glycerol 3-phosphate. Catalysis depends on lysine 194, which acts as the Proton acceptor. Arginine 258 is an NADPH binding site. 2 residues coordinate NADPH: valine 282 and glutamate 284.

This sequence belongs to the NAD-dependent glycerol-3-phosphate dehydrogenase family.

The protein localises to the cytoplasm. The enzyme catalyses sn-glycerol 3-phosphate + NAD(+) = dihydroxyacetone phosphate + NADH + H(+). It carries out the reaction sn-glycerol 3-phosphate + NADP(+) = dihydroxyacetone phosphate + NADPH + H(+). It participates in membrane lipid metabolism; glycerophospholipid metabolism. Its function is as follows. Catalyzes the reduction of the glycolytic intermediate dihydroxyacetone phosphate (DHAP) to sn-glycerol 3-phosphate (G3P), the key precursor for phospholipid synthesis. The polypeptide is Glycerol-3-phosphate dehydrogenase [NAD(P)+] (Aeromonas salmonicida (strain A449)).